The chain runs to 472 residues: Levansucrase (472 aa).

An N-terminal signal peptide occupies residues 1–29 (MNIKKIVKQATVLTFTTALLAGGATQAFA). The sucrose site is built by W85, D86, and S164. D86 (nucleophile) is an active-site residue. D241 provides a ligand contact to Ca(2+). Sucrose-binding residues include R246 and D247. Ca(2+) is bound by residues Q272, L308, N310, and D339. Residue E340 coordinates sucrose. The Proton donor/acceptor role is filled by E342. Position 360 (R360) interacts with sucrose.

This sequence belongs to the glycosyl hydrolase 68 family.

It is found in the secreted. It carries out the reaction [6)-beta-D-fructofuranosyl-(2-&gt;](n) alpha-D-glucopyranoside + sucrose = [6)-beta-D-fructofuranosyl-(2-&gt;](n+1) alpha-D-glucopyranoside + D-glucose. With respect to regulation, ca(2+) may play an important structural role and promote stability of levansucrase. Functionally, catalyzes the synthesis of levan, a fructose polymer, by transferring the fructosyl moiety from sucrose to a growing acceptor molecule. Also displays sucrose hydrolase activity. In Bacillus amyloliquefaciens (Bacillus velezensis), this protein is Levansucrase.